Here is a 297-residue protein sequence, read N- to C-terminus: HTH-type transcriptional regulator ArgP (297 aa).

One can recognise an HTH lysR-type domain in the interval 4-60; that stretch reads PDYRTLQALDAVIRERGFERAAQKLCITQSAVSQRIKQLENTFGQPLLVRTVPPRPT. The H-T-H motif DNA-binding region spans 21 to 40; the sequence is FERAAQKLCITQSAVSQRIK.

Belongs to the LysR transcriptional regulatory family. As to quaternary structure, homodimer.

In terms of biological role, controls the transcription of genes involved in arginine and lysine metabolism. The chain is HTH-type transcriptional regulator ArgP from Cronobacter sakazakii (strain ATCC BAA-894) (Enterobacter sakazakii).